The primary structure comprises 971 residues: Exportin-2 (971 aa).

Position 1 is an N-acetylmethionine (methionine 1). One can recognise an Importin N-terminal domain in the interval 29-102 (AEKFLESVEG…KANIVHLMLS (74 aa)). Serine 112 is modified (phosphoserine). Residues lysine 574 and lysine 824 each carry the N6-acetyllysine modification. The residue at position 931 (serine 931) is a Phosphoserine.

Belongs to the XPO2/CSE1 family. As to quaternary structure, found in a complex with CSE1L/XPO2, Ran and KPNA2. Binds with high affinity to importin-alpha only in the presence of RanGTP. The complex is dissociated by the combined action of RanBP1 and RanGAP1. Interacts with CFTR.

It is found in the cytoplasm. The protein localises to the nucleus. Export receptor for importin-alpha. Mediates importin-alpha re-export from the nucleus to the cytoplasm after import substrates (cargos) have been released into the nucleoplasm. In the nucleus binds cooperatively to importin-alpha and to the GTPase Ran in its active GTP-bound form. Docking of this trimeric complex to the nuclear pore complex (NPC) is mediated through binding to nucleoporins. Upon transit of a nuclear export complex into the cytoplasm, disassembling of the complex and hydrolysis of Ran-GTP to Ran-GDP (induced by RANBP1 and RANGAP1, respectively) cause release of the importin-alpha from the export receptor. CSE1L/XPO2 then return to the nuclear compartment and mediate another round of transport. The directionality of nuclear export is thought to be conferred by an asymmetric distribution of the GTP- and GDP-bound forms of Ran between the cytoplasm and nucleus. This Bos taurus (Bovine) protein is Exportin-2 (CSE1L).